Consider the following 82-residue polypeptide: Turripeptide Gsg9.1 (82 aa).

Positions 1 to 23 (MMAKLMITVMTVFFLSLQQGADG) are cleaved as a signal peptide. Positions 24-46 (LFERWRKNQMAASRIMGNLITAR) are excised as a propeptide. 4-hydroxyproline occurs at positions 49 and 50. 3 cysteine pairs are disulfide-bonded: cysteine 53/cysteine 68, cysteine 58/cysteine 72, and cysteine 64/cysteine 79. 4-carboxyglutamate occurs at positions 60 and 63.

It belongs to the Pg turripeptide superfamily. As to expression, expressed by the venom duct.

Its subcellular location is the secreted. The polypeptide is Turripeptide Gsg9.1 (Gemmula sogodensis (Gem-turris)).